A 106-amino-acid chain; its full sequence is MGKNNDWLNFEHLVKDKQIEALKPPSMYKVILNNDDYTPMEFVIDVLQKFFSYDIERATQLMLNVHYQGKAICGVFTAEVAETKVAHVNQYARENEHPLLCTLEKA.

This sequence belongs to the ClpS family. Binds to the N-terminal domain of the chaperone ClpA.

Involved in the modulation of the specificity of the ClpAP-mediated ATP-dependent protein degradation. The polypeptide is ATP-dependent Clp protease adapter protein ClpS (Yersinia enterocolitica serotype O:8 / biotype 1B (strain NCTC 13174 / 8081)).